The primary structure comprises 683 residues: Putative boron transporter 5 (683 aa).

Residues 1-38 (MEEERVEGSKRPFQGIIRDVKGRALCYKQDWIAGLRSG) lie on the Cytoplasmic side of the membrane. Residues 39-59 (FGILAPTTYVFFASALPVIAF) traverse the membrane as a helical segment. Residues 60–80 (GEQLSHDTERSLSTVETLAST) are Extracellular-facing. Residues 81–101 (ALCGVIHSLLGGQPLLILGVA) form a helical membrane-spanning segment. At 102 to 126 (EPTVLMYKYLYDFAKGRPELGKQLY) the chain is on the cytoplasmic side. The chain crosses the membrane as a helical span at residues 127–147 (LAWVAWVCVWTALLLFLMAIF). The Extracellular portion of the chain corresponds to 148-158 (NMAYIINRFTR). A helical membrane pass occupies residues 159 to 179 (IAGELFGMLIAVLFLQQTIKG). Residues 180 to 200 (MVSEFRIPKGEDSKLEKYQFE) are Cytoplasmic-facing. A helical transmembrane segment spans residues 201 to 221 (WLYTNGLLGLIFTVGLVYTAL). The Extracellular portion of the chain corresponds to 222 to 238 (KSRKARSWPYGTGCCRS). Residues 239–259 (FVADYGVPLMVVVWTALSFST) traverse the membrane as a helical segment. The Cytoplasmic segment spans residues 260–294 (PSKLPSGVPRRLVSPLPWDSVSLTHWTVIKDMGKV). A helical transmembrane segment spans residues 295–315 (SPGYIFAAFIPALMIAGLYFF). Residues 316–335 (DHSVVSQLAQQKEFNLKNPS) lie on the Extracellular side of the membrane. The chain crosses the membrane as a helical span at residues 336–356 (AYHYDILLLGFMVLICGMLGL). The Cytoplasmic portion of the chain corresponds to 357–477 (PPSNGVLPQS…EQRVSNLLQS (121 aa)). A helical membrane pass occupies residues 478-498 (LLVIGAVFALPVIKLIPTSLL). Over 499 to 565 (WGYFAYMAID…QILYFGLCYG (67 aa)) the chain is Extracellular. A helical transmembrane segment spans residues 566 to 586 (VTWIPVAGIMFPVLFFLLVAI). Residues 587-683 (RQYLLPKLFK…GDGDMSSSRE (97 aa)) are Cytoplasmic-facing.

Belongs to the anion exchanger (TC 2.A.31.3) family.

It localises to the membrane. Its function is as follows. Putative boron transporter. Boron is essential for maintaining the integrity of plants cell walls. In Arabidopsis thaliana (Mouse-ear cress), this protein is Putative boron transporter 5 (BOR5).